Reading from the N-terminus, the 369-residue chain is sn-glycerol-3-phosphate import ATP-binding protein UgpC 1 (369 aa).

Residues 4 to 234 (ISIRGVKKNY…PVSRFVAGFV (231 aa)) enclose the ABC transporter domain. ATP is bound at residue 36-43 (GPSGCGKS).

Belongs to the ABC transporter superfamily. sn-glycerol-3-phosphate importer (TC 3.A.1.1.3) family. The complex is composed of two ATP-binding proteins (UgpC), two transmembrane proteins (UgpA and UgpE) and a solute-binding protein (UgpB).

The protein localises to the cell inner membrane. It catalyses the reaction sn-glycerol 3-phosphate(out) + ATP + H2O = sn-glycerol 3-phosphate(in) + ADP + phosphate + H(+). Part of the ABC transporter complex UgpBAEC involved in sn-glycerol-3-phosphate (G3P) import. Responsible for energy coupling to the transport system. This Rhizobium johnstonii (strain DSM 114642 / LMG 32736 / 3841) (Rhizobium leguminosarum bv. viciae) protein is sn-glycerol-3-phosphate import ATP-binding protein UgpC 1.